We begin with the raw amino-acid sequence, 713 residues long: Probable tRNA (uracil-O(2)-)-methyltransferase (713 aa).

Disordered stretches follow at residues 49–92 (TLRS…REGT) and 480–508 (LHSR…HDAG). Phosphoserine is present on S76. Basic and acidic residues predominate over residues 79–89 (GEPESGPRASR). Position 489 is a phosphoserine (S489). The C3H1-type zinc-finger motif lies at 669-698 (FKTRICWFFAHHPDGCVLPAAQCPFAHGPE).

Belongs to the TRM44 family.

Its subcellular location is the cytoplasm. The catalysed reaction is uridine(44) in tRNA(Ser) + S-adenosyl-L-methionine = 2'-O-methyluridine(44) in tRNA(Ser) + S-adenosyl-L-homocysteine + H(+). In terms of biological role, probable adenosyl-L-methionine (AdoMet)-dependent tRNA (uracil-O(2)-)-methyltransferase. The protein is Probable tRNA (uracil-O(2)-)-methyltransferase (Trmt44) of Mus musculus (Mouse).